Consider the following 128-residue polypeptide: Glycine cleavage system H protein (128 aa).

The region spanning isoleucine 25–lysine 107 is the Lipoyl-binding domain. At lysine 66 the chain carries N6-lipoyllysine.

Belongs to the GcvH family. As to quaternary structure, the glycine cleavage system is composed of four proteins: P, T, L and H. Requires (R)-lipoate as cofactor.

Functionally, the glycine cleavage system catalyzes the degradation of glycine. The H protein shuttles the methylamine group of glycine from the P protein to the T protein. This chain is Glycine cleavage system H protein, found in Neisseria meningitidis serogroup A / serotype 4A (strain DSM 15465 / Z2491).